We begin with the raw amino-acid sequence, 1491 residues long: Chromosome partition protein MukB (1491 aa).

34–41 is a binding site for ATP; that stretch reads GGNGAGKS. Coiled coils occupy residues 302–418, 488–600, 638–666, 781–806, 836–1109, and 1210–1239; these read LIEQ…QYQQ, EVAR…RFES, ELEKAQSMAKDKLAERRAKLDSEIERLAS, RAAREQRLELLREERDDVVEQHAKAS, EQAL…DLRT, and VEAIEEMEVELARLTEELTQREQRLAISSD. A flexible hinge region spans residues 667–784; that stretch reads PGGSNDPRLK…AIPLFGRAAR (118 aa). The segment at 1059 to 1080 is disordered; sequence QRRRDELQERLHTSRSRKSEYE.

This sequence belongs to the SMC family. MukB subfamily. Homodimerization via its hinge domain. Binds to DNA via its C-terminal region. Interacts, and probably forms a ternary complex, with MukE and MukF via its C-terminal region. The complex formation is stimulated by calcium or magnesium. Interacts with tubulin-related protein FtsZ.

It is found in the cytoplasm. Its subcellular location is the nucleoid. Functionally, plays a central role in chromosome condensation, segregation and cell cycle progression. Functions as a homodimer, which is essential for chromosome partition. Involved in negative DNA supercoiling in vivo, and by this means organize and compact chromosomes. May achieve or facilitate chromosome segregation by condensation DNA from both sides of a centrally located replisome during cell division. This chain is Chromosome partition protein MukB, found in Vibrio cholerae serotype O1 (strain ATCC 39541 / Classical Ogawa 395 / O395).